The sequence spans 440 residues: Glucoside xylosyltransferase 1 (440 aa).

Residues 1–6 (MRRYLR) are Cytoplasmic-facing. A helical; Signal-anchor for type II membrane protein membrane pass occupies residues 7–29 (VVVLCVACGFCSLLYAFSQLAVS). Topologically, residues 30-440 (LEEGTGGGGG…DRYARSPKEK (411 aa)) are lumenal. N-linked (GlcNAc...) asparagine glycosylation is found at Asn173, Asn237, and Asn278.

Belongs to the glycosyltransferase 8 family.

Its subcellular location is the membrane. It catalyses the reaction 3-O-(beta-D-glucosyl)-L-seryl-[EGF-like domain protein] + UDP-alpha-D-xylose = 3-O-[alpha-D-xylosyl-(1-&gt;3)-beta-D-glucosyl]-L-seryl-[EGF-like domain protein] + UDP + H(+). In terms of biological role, glycosyltransferase which elongates the O-linked glucose attached to EGF-like repeats in the extracellular domain of Notch proteins by catalyzing the addition of xylose. This chain is Glucoside xylosyltransferase 1 (GXYLT1), found in Homo sapiens (Human).